Consider the following 168-residue polypeptide: NAD(P)H-quinone oxidoreductase subunit J, chloroplastic (168 aa).

The protein belongs to the complex I 30 kDa subunit family. In terms of assembly, NDH is composed of at least 16 different subunits, 5 of which are encoded in the nucleus.

The protein resides in the plastid. It is found in the chloroplast thylakoid membrane. It carries out the reaction a plastoquinone + NADH + (n+1) H(+)(in) = a plastoquinol + NAD(+) + n H(+)(out). It catalyses the reaction a plastoquinone + NADPH + (n+1) H(+)(in) = a plastoquinol + NADP(+) + n H(+)(out). In terms of biological role, NDH shuttles electrons from NAD(P)H:plastoquinone, via FMN and iron-sulfur (Fe-S) centers, to quinones in the photosynthetic chain and possibly in a chloroplast respiratory chain. The immediate electron acceptor for the enzyme in this species is believed to be plastoquinone. Couples the redox reaction to proton translocation, and thus conserves the redox energy in a proton gradient. This chain is NAD(P)H-quinone oxidoreductase subunit J, chloroplastic, found in Chaetosphaeridium globosum (Charophycean green alga).